We begin with the raw amino-acid sequence, 368 residues long: FAD-dependent monooxygenase phomE (368 aa).

An FAD-binding site is contributed by alanine 11. Catalysis depends on residues arginine 140 and tyrosine 178. The FAD site is built by aspartate 249 and glycine 262.

It belongs to the paxM FAD-dependent monooxygenase family. Monomer. The cofactor is FAD.

Functionally, FAD-dependent monooxygenase; part of the gene cluster that mediates the biosynthesis of the phomopsins, a group of hexapeptide mycotoxins which infects lupins and causes lupinosis disease in livestock. The role of phomE within the phomopsins biosynthesis pathway has still to be determined. The pathway starts with the processing of the precursor phomA by several endopeptidases including kexin proteases as well as the cluster-specific S41 family peptidase phomP1 and the oligopeptidase phomG to produce 10 identical copies of the hexapeptide Tyr-Val-Ile-Pro-Ile-Asp. After being excised from the precursor peptide, the core peptides are cyclized and modified post-translationally by enzymes encoded within the gene cluster. The timing and order of proteolysis of the phomA precursor and PTMs are still unknown. Two tyrosinase-like enzymes, phomQ1 and phomQ2, catalyze the chlorination and hydroxylation of Tyr, respectively. PhomYb, is proposed to be involved in the construction of the macrocyclic structure. The other 4 ustYa family proteins may be involved in PTMs that generate the unique structure of phomopsin A. PhomYa is required for the hydroxylation of C-beta of Tyr. PhomYc, phomYd, and phomYe are responsible for the biosynthesis of 2,3-dehydroisoleucine (dIle), 2,3-dehydroaspartic acid (dAsp), and 3,4-dehydroproline (dPro), respectively. While dIle formation by phomYc is indispensable for the installation of dAsp by phomYd, the order of the other PTMs have not been elucidated yet. Most of the biosynthetic enzymes likely have broad substrate specificity, and thus, there might be a metabolic grid from a precursor to phomopsin A. The enzyme(s) responsible for the biosynthesis of 3,4-dehydrovaline (dVal) have also not been identified yet. Finally, phomM acts as an S-adenosylmethionine-dependent alpha-N-methyltransferase that catalyzes two successive N-methylation reactions, converting N-desmethyl-phomopsin A to phomopsin A and phomopsin A further to an N,N-dimethylated congener called phomopsin E. The sequence is that of FAD-dependent monooxygenase phomE from Diaporthe leptostromiformis (Lupinosis disease fungus).